A 203-amino-acid polypeptide reads, in one-letter code: Urease accessory protein UreG (203 aa).

14–21 (GPVGSGKT) serves as a coordination point for GTP.

The protein belongs to the SIMIBI class G3E GTPase family. UreG subfamily. Homodimer. UreD, UreF and UreG form a complex that acts as a GTP-hydrolysis-dependent molecular chaperone, activating the urease apoprotein by helping to assemble the nickel containing metallocenter of UreC. The UreE protein probably delivers the nickel.

The protein localises to the cytoplasm. Its function is as follows. Facilitates the functional incorporation of the urease nickel metallocenter. This process requires GTP hydrolysis, probably effectuated by UreG. The polypeptide is Urease accessory protein UreG (Agrobacterium fabrum (strain C58 / ATCC 33970) (Agrobacterium tumefaciens (strain C58))).